A 512-amino-acid chain; its full sequence is D-alanine--D-alanyl carrier protein ligase (512 aa).

152-153 (TS) is a binding site for ATP. Asp-199 contributes to the D-alanine binding site. Residue 294–299 (NAYGPT) coordinates ATP. A D-alanine-binding site is contributed by Val-303. Residues Asp-385, 397 to 400 (YGGR), and Lys-499 contribute to the ATP site. D-alanine is bound at residue Lys-499.

This sequence belongs to the ATP-dependent AMP-binding enzyme family. DltA subfamily.

The protein resides in the cytoplasm. The enzyme catalyses holo-[D-alanyl-carrier protein] + D-alanine + ATP = D-alanyl-[D-alanyl-carrier protein] + AMP + diphosphate. It functions in the pathway cell wall biogenesis; lipoteichoic acid biosynthesis. In terms of biological role, catalyzes the first step in the D-alanylation of lipoteichoic acid (LTA), the activation of D-alanine and its transfer onto the D-alanyl carrier protein (Dcp) DltC. In an ATP-dependent two-step reaction, forms a high energy D-alanyl-AMP intermediate, followed by transfer of the D-alanyl residue as a thiol ester to the phosphopantheinyl prosthetic group of the Dcp. D-alanylation of LTA plays an important role in modulating the properties of the cell wall in Gram-positive bacteria, influencing the net charge of the cell wall. In Streptococcus pyogenes serotype M49 (strain NZ131), this protein is D-alanine--D-alanyl carrier protein ligase.